The chain runs to 532 residues: Invertase 2 (532 aa).

The first 19 residues, 1–19, serve as a signal peptide directing secretion; that stretch reads MLLQAFLFLLAGFAAKISA. Asparagine 23 is a glycosylation site (N-linked (GlcNAc...) asparagine). Residues 39-42 and glutamine 60 each bind substrate; that span reads WMND. The active site involves aspartate 42. N-linked (GlcNAc...) asparagine; partial glycosylation is present at asparagine 64. N-linked (GlcNAc...) asparagine glycosylation is present at asparagine 97. 102-103 is a substrate binding site; sequence FS. N-linked (GlcNAc...) asparagine glycans are attached at residues asparagine 111 and asparagine 118. Asparagine 165 carries N-linked (GlcNAc...) asparagine; partial glycosylation. Substrate is bound by residues 170-171 and glutamate 223; that span reads RD. Asparagine 266 and asparagine 275 each carry an N-linked (GlcNAc...) asparagine; partial glycan. Tryptophan 311 contacts substrate. Asparagine 356, asparagine 369, asparagine 384, and asparagine 398 each carry an N-linked (GlcNAc...) asparagine glycan. Asparagine 512 is a glycosylation site (N-linked (GlcNAc...) asparagine; partial).

This sequence belongs to the glycosyl hydrolase 32 family. In terms of processing, isoform Secreted is glycosylated. Isoform Intracellular is not glycosylated.

Its subcellular location is the cytoplasm. The protein resides in the secreted. It catalyses the reaction Hydrolysis of terminal non-reducing beta-D-fructofuranoside residues in beta-D-fructofuranosides.. The protein is Invertase 2 (SUC2) of Saccharomyces cerevisiae (strain ATCC 204508 / S288c) (Baker's yeast).